Consider the following 263-residue polypeptide: Chymotrypsinogen B2 (263 aa).

The N-terminal stretch at 1 to 18 (MAFLWLLSCWALLGTTFG) is a signal peptide. 5 cysteine pairs are disulfide-bonded: Cys19/Cys140, Cys60/Cys76, Cys154/Cys219, Cys186/Cys200, and Cys209/Cys238. The Peptidase S1 domain maps to 34 to 261 (IVNGEDAVPG…LIPWVQKILA (228 aa)). Active-site charge relay system residues include His75 and Asp120. Ser213 (charge relay system) is an active-site residue.

The protein belongs to the peptidase S1 family.

It localises to the secreted. The protein resides in the extracellular space. The enzyme catalyses Preferential cleavage: Tyr-|-Xaa, Trp-|-Xaa, Phe-|-Xaa, Leu-|-Xaa.. This chain is Chymotrypsinogen B2 (CTRB2), found in Homo sapiens (Human).